The chain runs to 57 residues: uncharacterized protein (57 aa).

The chain crosses the membrane as a helical span at residues 4–26 (FMPIRVFLYSYVIINSLLSSFFH).

The protein resides in the membrane. This is an uncharacterized protein from Saccharomyces cerevisiae (strain ATCC 204508 / S288c) (Baker's yeast).